Consider the following 283-residue polypeptide: Pre-protein-C8 (283 aa).

A signal peptide (tat-type signal) is located at residues M1–A40. Residues A61–Q75 are helix-loop-helix (HLH) region.

In terms of assembly, immunity protein HalI interacts with Halocin-C8; the interaction is direct. Predicted to be exported by the Tat system. The position of the signal peptide cleavage has not been experimentally proven.

The protein resides in the secreted. It is found in the cell membrane. Functionally, has antibacterial activity against a wide variety of haloarchaeons. Causes cell lysis and death, possibly by disrupting the cell wall. Acts as an immunity protein for halocin-C8. Able to block the halocin-C8 activity by sequestering the activity of halocin-C8 through specific and direct binding. The chain is Pre-protein-C8 (proC8) from Halobacterium sp. (strain AS7092).